Consider the following 382-residue polypeptide: MKSLSILGSTGSIGLSTLDVVRQHPDRFTITGLAEGHDVTLLAEQIREFKPSIVSVRDEASANQLRELIGESGPEIRWGIEGAAVVGEADGSDMVVSAIVGAAGLVPTVRAIKAGKDIALANKETLVVAGQLVSELVREHKVQLLPVDSEHSAIFQSLSGHRTEDIERIILTASGGPFRKTPAEELKLVKPEQALKHPQWSMGAKITIDSATLMNKGLEVIEAHWLFNMPAEKIGVVVHPQSIIHSMVEYIDGCVMAQLGAPDMRAPIAYALSWPERCESGIKKLDLTQIGTLTFEEPDMKRFPALRLAFDALREGRTYPAVLNAANEIAVAAFLNNNIGFTDIPAIVDKTMQAHEALTPVDLDEYLAVDRWARETAAALTL.

Threonine 10, glycine 11, serine 12, isoleucine 13, glycine 36, and asparagine 122 together coordinate NADPH. Lysine 123 serves as a coordination point for 1-deoxy-D-xylulose 5-phosphate. Glutamate 124 is a binding site for NADPH. Residue aspartate 148 coordinates Mn(2+). Residues serine 149, glutamate 150, serine 174, and histidine 197 each coordinate 1-deoxy-D-xylulose 5-phosphate. Glutamate 150 provides a ligand contact to Mn(2+). Glycine 203 is an NADPH binding site. 1-deoxy-D-xylulose 5-phosphate is bound by residues serine 210, asparagine 215, lysine 216, and glutamate 219. Glutamate 219 is a binding site for Mn(2+).

It belongs to the DXR family. Mg(2+) serves as cofactor. The cofactor is Mn(2+).

It catalyses the reaction 2-C-methyl-D-erythritol 4-phosphate + NADP(+) = 1-deoxy-D-xylulose 5-phosphate + NADPH + H(+). It participates in isoprenoid biosynthesis; isopentenyl diphosphate biosynthesis via DXP pathway; isopentenyl diphosphate from 1-deoxy-D-xylulose 5-phosphate: step 1/6. Catalyzes the NADPH-dependent rearrangement and reduction of 1-deoxy-D-xylulose-5-phosphate (DXP) to 2-C-methyl-D-erythritol 4-phosphate (MEP). The protein is 1-deoxy-D-xylulose 5-phosphate reductoisomerase of Prosthecochloris aestuarii (strain DSM 271 / SK 413).